We begin with the raw amino-acid sequence, 556 residues long: Formate--tetrahydrofolate ligase 1 (556 aa).

65-72 contacts ATP; sequence TPAGEGKS.

The protein belongs to the formate--tetrahydrofolate ligase family.

It carries out the reaction (6S)-5,6,7,8-tetrahydrofolate + formate + ATP = (6R)-10-formyltetrahydrofolate + ADP + phosphate. Its pathway is one-carbon metabolism; tetrahydrofolate interconversion. This Streptococcus pyogenes serotype M1 protein is Formate--tetrahydrofolate ligase 1.